A 528-amino-acid chain; its full sequence is Potassium voltage-gated channel subfamily A member 3 (528 aa).

The segment at 1-32 (MTVVPGDHLLEPEAAGGGGGDPPQGGCGSGGG) is disordered. Topologically, residues 1–187 (MTVVPGDHLL…EYPESSGPAR (187 aa)) are cytoplasmic. Residues 15–32 (AGGGGGDPPQGGCGSGGG) are compositionally biased toward gly residues. The helical transmembrane segment at 188–206 (GIAIVSVLVILISIVIFCL) threads the bilayer. Residues 207–247 (ETLPEFRDEKDYPASPSQDVFEAANNSTSGAPSGASSFSDP) are Extracellular-facing. Asparagine 232 carries N-linked (GlcNAc...) asparagine glycosylation. The chain crosses the membrane as a helical span at residues 248-269 (FFVVETLCIIWFSFELLVRFFA). Cysteine 270 carries the S-palmitoyl cysteine lipid modification. At 270 to 280 (CPSKATFSRNI) the chain is on the cytoplasmic side. Residues 281-301 (MNLIDIVAIIPYFITLGTELA) traverse the membrane as a helical segment. Residues 302 to 315 (ERQGNGQQAMSLAI) are Extracellular-facing. Residues 316-334 (LRVIRLVRVFRIFKLSRHS) traverse the membrane as a helical; Voltage-sensor segment. The Cytoplasmic segment spans residues 335 to 350 (KGLQILGQTLKASMRE). A helical membrane pass occupies residues 351–370 (LGLLIFFLFIGVILFSSAVY). The Extracellular portion of the chain corresponds to 371–411 (FAEADDPSSGFNSIPDAFWWAVVTMTTVGYGDMHPVTIGGK). Positions 397-402 (TVGYGD) match the Selectivity filter motif. The helical transmembrane segment at 412–434 (IVGSLCAIAGVLTIALPVPVIVS) threads the bilayer. Topologically, residues 435–528 (NFNYFYHRET…VNIKKIFTDV (94 aa)) are cytoplasmic. The segment at 435–528 (NFNYFYHRET…VNIKKIFTDV (94 aa)) is interaction with KCNE4. Residue tyrosine 452 is modified to Phosphotyrosine. Serine 473 is modified (phosphoserine; by PKA). The short motif at 526–528 (TDV) is the PDZ-binding element.

It belongs to the potassium channel family. A (Shaker) (TC 1.A.1.2) subfamily. Kv1.3/KCNA3 sub-subfamily. Homotetramer. Forms heterooligomers with KCNE4 which inhibits KCNA3 activity by impairing localization to the cell membrane. The stoichiometry of KCNA3 and KCNE4 in the heterooligomers are 4:1, 4:2, 4:3 or 4:4 respectively. Increasing the number of KCNE4 subunits steadily slows the activation KCNA3 and decreases its abundance at the cell membrane. However, a single subunit of KCNE4 is sufficient for the cooperative enhancement of the inactivating function of the channel. Interacts with SEC24D; this interaction is reduced in the presence of KCNE4. Interacts with DLG1, DLG2 and DLG4 via their PDZ domains. N-glycosylation promotes the cell surface expression. Post-translationally, phosphorylation on Tyr-452 inhibits its channel activity.

It localises to the cell membrane. The enzyme catalyses K(+)(in) = K(+)(out). Activity is up-regulated by JAK2. Mediates the voltage-dependent potassium ion permeability of excitable membranes. Assuming opened or closed conformations in response to the voltage difference across the membrane, the protein forms a potassium-selective channel through which potassium ions may pass in accordance with their electrochemical gradient. This is Potassium voltage-gated channel subfamily A member 3 (Kcna3) from Mus musculus (Mouse).